A 165-amino-acid chain; its full sequence is GTP-dependent dephospho-CoA kinase (165 aa).

D44, V45, D63, K65, E115, and D138 together coordinate GTP.

It belongs to the GTP-dependent DPCK family.

The catalysed reaction is 3'-dephospho-CoA + GTP = GDP + CoA + H(+). The protein operates within cofactor biosynthesis; coenzyme A biosynthesis. In terms of biological role, catalyzes the GTP-dependent phosphorylation of the 3'-hydroxyl group of dephosphocoenzyme A to form coenzyme A (CoA). This chain is GTP-dependent dephospho-CoA kinase, found in Picrophilus torridus (strain ATCC 700027 / DSM 9790 / JCM 10055 / NBRC 100828 / KAW 2/3).